The sequence spans 1203 residues: Cingulin (1203 aa).

The segment at 7-357 (MAEPRGPVDH…VMVSSGSTKA (351 aa)) is head. Positions 25-48 (EPVSGAEMGTLRRGGRRPAKDARA) are disordered. Residues 48–62 (ASTYGVAVRVQGIAG) carry the ZIM motif. The interval 54–67 (AVRVQGIAGQPFVV) is interaction with TJP1/ZO1. The interval 89-127 (GASGALSSDLELPENPYSQVKGFPAPSQSSTSDEEPGAY) is disordered. Residues S95, S96, S135, S137, S140, S155, S165, S214, S217, S258, S276, S338, and S351 each carry the phosphoserine modification. The tract at residues 186-266 (DSQLGGQARG…LSPLSGFSRS (81 aa)) is disordered. Over residues 207–231 (EQRKRSKSLDSRLPRDTFEERERQS) the composition is skewed to basic and acidic residues. Residues 232–266 (TNHWTSSTKYDNHVGTSKQPAQSQNLSPLSGFSRS) are compositionally biased toward polar residues. The stretch at 358–1160 (VAGQGELTRK…SLEKDSWRKA (803 aa)) forms a coiled coil. The residue at position 579 (K579) is an N6-acetyllysine. Phosphothreonine is present on T712. 2 disordered regions span residues 1034–1053 (LASSEGFQKPSASLSQLESQ) and 1154–1181 (KDSWRKASRSAAESALKNEGLSSDEEFD). Residues 1044–1053 (SASLSQLESQ) are compositionally biased toward low complexity. A tail region spans residues 1161–1203 (SRSAAESALKNEGLSSDEEFDSVYDPSSIASLLTESNLQTSSC). S1175, S1176, and S1182 each carry phosphoserine.

It belongs to the cingulin family. Homodimer. Interacts with TJP1/ZO1. Interacts with SPEF1. As to expression, localized on the cytoplasmic face of tight junctions of polarized epithelia and some endothelia. Expressed in pancreas, kidney, liver and lung, but not in skeletal muscle, placenta, brain or heart.

It is found in the cell junction. The protein localises to the tight junction. Functionally, probably plays a role in the formation and regulation of the tight junction (TJ) paracellular permeability barrier. In Homo sapiens (Human), this protein is Cingulin.